Consider the following 1465-residue polypeptide: Ankyrin and armadillo repeat-containing protein (1465 aa).

Residues 313 to 329 (MGYLKLICFLIPFLLSL) traverse the membrane as a helical segment. 5 ANK repeats span residues 532 to 561 (AGYA…NVNQ), 582 to 611 (NGPT…DYTL), 615 to 644 (RGWM…SLLE), 651 to 680 (NQCT…NWRK), and 684 to 714 (KGNN…ELPV). ARM repeat units follow at residues 745–784 (DRYW…NIST), 786–825 (VSIV…DVAK), 827–865 (ENKD…VLCM), 868–907 (ESNQ…EVAR), 910–949 (KEVQ…SLAN), and 1085–1125 (PMSQ…CIVL). Residues 1431–1465 (KLGKDEQKANPDPPAFLNKLGKDEQNANPDPAESQ) are disordered.

The protein localises to the membrane. This Mus musculus (Mouse) protein is Ankyrin and armadillo repeat-containing protein (Ankar).